A 187-amino-acid polypeptide reads, in one-letter code: ATP synthase subunit b (187 aa).

A helical transmembrane segment spans residues 4–24; that stretch reads LALFALLMVPAILLASGHDSG.

It belongs to the ATPase B chain family. In terms of assembly, F-type ATPases have 2 components, F(1) - the catalytic core - and F(0) - the membrane proton channel. F(1) has five subunits: alpha(3), beta(3), gamma(1), delta(1), epsilon(1). F(0) has three main subunits: a(1), b(2) and c(10-14). The alpha and beta chains form an alternating ring which encloses part of the gamma chain. F(1) is attached to F(0) by a central stalk formed by the gamma and epsilon chains, while a peripheral stalk is formed by the delta and b chains.

It localises to the cell inner membrane. Functionally, f(1)F(0) ATP synthase produces ATP from ADP in the presence of a proton or sodium gradient. F-type ATPases consist of two structural domains, F(1) containing the extramembraneous catalytic core and F(0) containing the membrane proton channel, linked together by a central stalk and a peripheral stalk. During catalysis, ATP synthesis in the catalytic domain of F(1) is coupled via a rotary mechanism of the central stalk subunits to proton translocation. In terms of biological role, component of the F(0) channel, it forms part of the peripheral stalk, linking F(1) to F(0). The protein is ATP synthase subunit b of Sulfurovum sp. (strain NBC37-1).